A 156-amino-acid chain; its full sequence is Small ribosomal subunit protein uS7 (156 aa).

Belongs to the universal ribosomal protein uS7 family. Part of the 30S ribosomal subunit. Contacts proteins S9 and S11.

In terms of biological role, one of the primary rRNA binding proteins, it binds directly to 16S rRNA where it nucleates assembly of the head domain of the 30S subunit. Is located at the subunit interface close to the decoding center, probably blocks exit of the E-site tRNA. The polypeptide is Small ribosomal subunit protein uS7 (Tropheryma whipplei (strain TW08/27) (Whipple's bacillus)).